A 93-amino-acid polypeptide reads, in one-letter code: Putative protein adenylyltransferase MJ0435 (93 aa).

The GSX(10)DXD motif signature appears at 26–40; that stretch reads GSYARNEQKETSDID. Mg(2+) contacts are provided by aspartate 38, aspartate 40, and aspartate 70.

The protein belongs to the MntA antitoxin family. In terms of assembly, probably forms a complex with cognate toxin MJ0434. The cofactor is Mg(2+).

The enzyme catalyses L-tyrosyl-[protein] + ATP = O-(5'-adenylyl)-L-tyrosyl-[protein] + diphosphate. It catalyses the reaction O-(5'-adenylyl)-L-tyrosyl-[protein] + ATP = O-[5'-(adenylyl-(5'-&gt;3')-adenylyl)]-L-tyrosyl-[protein] + diphosphate. Functionally, probable antitoxin component of a putative type VII toxin-antitoxin (TA) system. Neutralizes cognate toxic MJ0434 by di-AMPylation. The polypeptide is Putative protein adenylyltransferase MJ0435 (Methanocaldococcus jannaschii (strain ATCC 43067 / DSM 2661 / JAL-1 / JCM 10045 / NBRC 100440) (Methanococcus jannaschii)).